A 361-amino-acid polypeptide reads, in one-letter code: tRNA/tmRNA (uracil-C(5))-methyltransferase (361 aa).

S-adenosyl-L-methionine-binding residues include Q185, Y213, N218, E234, and D294. The active-site Nucleophile is the C319. The active-site Proton acceptor is E353.

This sequence belongs to the class I-like SAM-binding methyltransferase superfamily. RNA M5U methyltransferase family. TrmA subfamily.

It catalyses the reaction uridine(54) in tRNA + S-adenosyl-L-methionine = 5-methyluridine(54) in tRNA + S-adenosyl-L-homocysteine + H(+). The enzyme catalyses uridine(341) in tmRNA + S-adenosyl-L-methionine = 5-methyluridine(341) in tmRNA + S-adenosyl-L-homocysteine + H(+). Dual-specificity methyltransferase that catalyzes the formation of 5-methyluridine at position 54 (m5U54) in all tRNAs, and that of position 341 (m5U341) in tmRNA (transfer-mRNA). This Pseudomonas putida (strain ATCC 47054 / DSM 6125 / CFBP 8728 / NCIMB 11950 / KT2440) protein is tRNA/tmRNA (uracil-C(5))-methyltransferase.